The sequence spans 229 residues: RNA pyrophosphohydrolase (229 aa).

One can recognise a Nudix hydrolase domain in the interval 6–149 (GFRPNVGIIL…KRGVYEMALT (144 aa)). A Nudix box motif is present at residues 38 to 59 (GGIDRGETPEQAMFRELHEEVG). The disordered stretch occupies residues 191–229 (KPGMELPPGASFDPDPQNSVPAPLEALPTLPVPKKPLDA). The segment covering 220 to 229 (LPVPKKPLDA) has biased composition (pro residues).

The protein belongs to the Nudix hydrolase family. RppH subfamily. It depends on a divalent metal cation as a cofactor.

In terms of biological role, accelerates the degradation of transcripts by removing pyrophosphate from the 5'-end of triphosphorylated RNA, leading to a more labile monophosphorylated state that can stimulate subsequent ribonuclease cleavage. The polypeptide is RNA pyrophosphohydrolase (Acidovorax ebreus (strain TPSY) (Diaphorobacter sp. (strain TPSY))).